Reading from the N-terminus, the 230-residue chain is MKITWMGHGSFRIEIADQVLLIDPWITGNPVFPADRRDAALAGATHILITHGHGDHTADAVALSKELGAPIVGIYDLMSYWAETEGVETVGFNKGGTVMLGDVAVTMVNAVHSSSLGTDHGPMYAGAEAGFMIKGEGRTVYVSGDTDVMADMKVFNDLHQPEIGILASGGHFTMDMERAAYAARTFFDFKTVIPCHYKTFPLLAQSAQPLIDGLPGTDVRTPEVMETIEL.

Belongs to the UPF0173 family.

The protein is UPF0173 metal-dependent hydrolase Dshi_2788 of Dinoroseobacter shibae (strain DSM 16493 / NCIMB 14021 / DFL 12).